The following is a 232-amino-acid chain: Orotidine 5'-phosphate decarboxylase (232 aa).

Residues D13, K35, 62-71 (DLKFHDIPNT), T122, R182, Q191, G211, and R212 each bind substrate. K64 functions as the Proton donor in the catalytic mechanism.

Belongs to the OMP decarboxylase family. Type 1 subfamily. In terms of assembly, homodimer.

The catalysed reaction is orotidine 5'-phosphate + H(+) = UMP + CO2. It participates in pyrimidine metabolism; UMP biosynthesis via de novo pathway; UMP from orotate: step 2/2. Its function is as follows. Catalyzes the decarboxylation of orotidine 5'-monophosphate (OMP) to uridine 5'-monophosphate (UMP). The protein is Orotidine 5'-phosphate decarboxylase of Pseudomonas savastanoi pv. phaseolicola (strain 1448A / Race 6) (Pseudomonas syringae pv. phaseolicola (strain 1448A / Race 6)).